The following is a 314-amino-acid chain: tRNA dimethylallyltransferase (314 aa).

ATP is bound at residue 8 to 15 (GPTGAGKS). A substrate-binding site is contributed by 10–15 (TGAGKS).

Belongs to the IPP transferase family. As to quaternary structure, monomer. Mg(2+) serves as cofactor.

The enzyme catalyses adenosine(37) in tRNA + dimethylallyl diphosphate = N(6)-dimethylallyladenosine(37) in tRNA + diphosphate. Its function is as follows. Catalyzes the transfer of a dimethylallyl group onto the adenine at position 37 in tRNAs that read codons beginning with uridine, leading to the formation of N6-(dimethylallyl)adenosine (i(6)A). The polypeptide is tRNA dimethylallyltransferase (Mycobacterium tuberculosis (strain ATCC 25177 / H37Ra)).